Consider the following 194-residue polypeptide: Small ribosomal subunit protein uS4c (194 aa).

The 62-residue stretch at 82–143 (MRLDNILFRL…KERSKVLIQN (62 aa)) folds into the S4 RNA-binding domain.

This sequence belongs to the universal ribosomal protein uS4 family. Part of the 30S ribosomal subunit. Contacts protein S5. The interaction surface between S4 and S5 is involved in control of translational fidelity.

It localises to the plastid. It is found in the chloroplast. Functionally, one of the primary rRNA binding proteins, it binds directly to 16S rRNA where it nucleates assembly of the body of the 30S subunit. In terms of biological role, with S5 and S12 plays an important role in translational accuracy. In Trimezia steyermarkii (Steyermark's trimezia), this protein is Small ribosomal subunit protein uS4c (rps4).